We begin with the raw amino-acid sequence, 195 residues long: Protein A43 (195 aa).

The first 21 residues, 1-21, serve as a signal peptide directing secretion; sequence MMIKWIISILTMSIMPVLVYS. The Extracellular portion of the chain corresponds to 23–166; that stretch reads SIFRFRSEDV…YKDINDKYND (144 aa). N-linked (GlcNAc...) asparagine; by host glycans are attached at residues N66 and N115. A helical membrane pass occupies residues 167–187; that stretch reads IYDFTAICMLIASTLIVTIYV. Over 188–195 the chain is Cytoplasmic; the sequence is FKKIKMNS.

It belongs to the orthopoxvirus OPG172 protein family.

It localises to the host membrane. Its subcellular location is the host cell surface. In Homo sapiens (Human), this protein is Protein A43 (OPG172).